Consider the following 161-residue polypeptide: NADH-quinone oxidoreductase subunit I (161 aa).

4Fe-4S ferredoxin-type domains follow at residues 52-82 (LRRY…IESS) and 92-121 (TRYD…QGPN). Residues cysteine 62, cysteine 65, cysteine 68, cysteine 72, cysteine 101, cysteine 104, cysteine 107, and cysteine 111 each coordinate [4Fe-4S] cluster.

The protein belongs to the complex I 23 kDa subunit family. In terms of assembly, NDH-1 is composed of 14 different subunits. Subunits NuoA, H, J, K, L, M, N constitute the membrane sector of the complex. It depends on [4Fe-4S] cluster as a cofactor.

Its subcellular location is the cell inner membrane. It carries out the reaction a quinone + NADH + 5 H(+)(in) = a quinol + NAD(+) + 4 H(+)(out). NDH-1 shuttles electrons from NADH, via FMN and iron-sulfur (Fe-S) centers, to quinones in the respiratory chain. The immediate electron acceptor for the enzyme in this species is believed to be ubiquinone. Couples the redox reaction to proton translocation (for every two electrons transferred, four hydrogen ions are translocated across the cytoplasmic membrane), and thus conserves the redox energy in a proton gradient. This chain is NADH-quinone oxidoreductase subunit I, found in Pelagibacter ubique (strain HTCC1062).